The following is a 210-amino-acid chain: Putative cutinase (210 aa).

Residues Asp-26–Gly-38 are compositionally biased toward basic and acidic residues. Residues Asp-26–Ala-58 are disordered. Residues Ser-49–Ala-58 are compositionally biased toward low complexity.

It catalyses the reaction cutin + H2O = cutin monomers.. The protein is Putative cutinase of Phytophthora capsici.